The chain runs to 38 residues: Large ribosomal subunit protein bL36A (38 aa).

Belongs to the bacterial ribosomal protein bL36 family.

This is Large ribosomal subunit protein bL36A from Pectobacterium atrosepticum (strain SCRI 1043 / ATCC BAA-672) (Erwinia carotovora subsp. atroseptica).